A 280-amino-acid polypeptide reads, in one-letter code: 2,3,4,5-tetrahydropyridine-2,6-dicarboxylate N-succinyltransferase (280 aa).

Substrate-binding residues include arginine 109 and aspartate 146.

Belongs to the transferase hexapeptide repeat family. As to quaternary structure, homotrimer.

Its subcellular location is the cytoplasm. It carries out the reaction (S)-2,3,4,5-tetrahydrodipicolinate + succinyl-CoA + H2O = (S)-2-succinylamino-6-oxoheptanedioate + CoA. The protein operates within amino-acid biosynthesis; L-lysine biosynthesis via DAP pathway; LL-2,6-diaminopimelate from (S)-tetrahydrodipicolinate (succinylase route): step 1/3. In Blochmanniella floridana, this protein is 2,3,4,5-tetrahydropyridine-2,6-dicarboxylate N-succinyltransferase.